Here is a 469-residue protein sequence, read N- to C-terminus: Cytosolic Fe-S cluster assembly factor NAR1 (469 aa).

Residues Cys20, Cys56, Cys59, Cys62, Cys168, Cys215, Cys394, and Cys398 each coordinate [4Fe-4S] cluster.

The protein belongs to the NARF family.

Functionally, component of the cytosolic Fe/S protein assembly machinery. Required for maturation of extramitochondrial Fe/S proteins. May play a role in the transfer of pre-assembled Fe/S clusters to target apoproteins. The sequence is that of Cytosolic Fe-S cluster assembly factor NAR1 (NAR1) from Kluyveromyces lactis (strain ATCC 8585 / CBS 2359 / DSM 70799 / NBRC 1267 / NRRL Y-1140 / WM37) (Yeast).